Consider the following 113-residue polypeptide: MEVQALTRYARMSPKKMRDISRIIQGRKAAEAADYLALIPRKSARLIAKTLRSAIANAENNNNLSADALTVKLALIENGPVLKRFKAGARGSAMPRRKKMAHIRIVLTDGNSN.

This sequence belongs to the universal ribosomal protein uL22 family. Part of the 50S ribosomal subunit.

This protein binds specifically to 23S rRNA; its binding is stimulated by other ribosomal proteins, e.g. L4, L17, and L20. It is important during the early stages of 50S assembly. It makes multiple contacts with different domains of the 23S rRNA in the assembled 50S subunit and ribosome. Functionally, the globular domain of the protein is located near the polypeptide exit tunnel on the outside of the subunit, while an extended beta-hairpin is found that lines the wall of the exit tunnel in the center of the 70S ribosome. In Opitutus terrae (strain DSM 11246 / JCM 15787 / PB90-1), this protein is Large ribosomal subunit protein uL22.